Reading from the N-terminus, the 83-residue chain is Small ribosomal subunit protein uS17 (83 aa).

The protein belongs to the universal ribosomal protein uS17 family. Part of the 30S ribosomal subunit.

Its function is as follows. One of the primary rRNA binding proteins, it binds specifically to the 5'-end of 16S ribosomal RNA. The sequence is that of Small ribosomal subunit protein uS17 from Ehrlichia canis (strain Jake).